Consider the following 425-residue polypeptide: CBS domain-containing protein CBSX6 (425 aa).

The region spanning 16-90 is the CBS 1 domain; the sequence is GKPEMVEFYE…FLAKTECLQE (75 aa). A compositionally biased stretch (low complexity) spans 159–172; that stretch reads SENSSSSSGLSADS. The interval 159–182 is disordered; that stretch reads SENSSSSSGLSADSTNRPTTSMTS. A compositionally biased stretch (polar residues) spans 173–182; the sequence is TNRPTTSMTS. Helical transmembrane passes span 200-220 and 275-295; these read IGVLGALAPLPLTSISTLGII and YLAAAWALANLYAGQFVMGVE. The CBS 2 domain maps to 347–409; the sequence is MYRGRSAPLT…TAVTKQPSAF (63 aa).

It localises to the vacuole membrane. In Arabidopsis thaliana (Mouse-ear cress), this protein is CBS domain-containing protein CBSX6 (CBSX6).